Here is a 733-residue protein sequence, read N- to C-terminus: Fibronectin type III domain-containing protein 7 (733 aa).

The signal sequence occupies residues 1 to 25 (MAGGRETCLPLIGFILICLKMVASA). Fibronectin type-III domains lie at 28 to 115 (APEI…TVLA), 116 to 202 (APIL…TSPR), 203 to 288 (APAN…TVAC), 289 to 373 (APGR…TAPC), 374 to 459 (CPSD…TAPC), 460 to 544 (SPEI…TVPC), 545 to 632 (CPTG…CCPL), and 631 to 715 (PLGV…YSVT). Residue Asn-230 is glycosylated (N-linked (GlcNAc...) asparagine). Residue Asn-433 is glycosylated (N-linked (GlcNAc...) asparagine).

Its subcellular location is the secreted. In Homo sapiens (Human), this protein is Fibronectin type III domain-containing protein 7 (FNDC7).